Consider the following 413-residue polypeptide: Serine hydroxymethyltransferase (413 aa).

(6S)-5,6,7,8-tetrahydrofolate-binding positions include Leu-117 and 121-123 (GHL). An N6-(pyridoxal phosphate)lysine modification is found at Lys-226. Residues Glu-239 and 349 to 351 (SPF) contribute to the (6S)-5,6,7,8-tetrahydrofolate site.

This sequence belongs to the SHMT family. In terms of assembly, homodimer. Pyridoxal 5'-phosphate serves as cofactor.

Its subcellular location is the cytoplasm. It carries out the reaction (6R)-5,10-methylene-5,6,7,8-tetrahydrofolate + glycine + H2O = (6S)-5,6,7,8-tetrahydrofolate + L-serine. The protein operates within one-carbon metabolism; tetrahydrofolate interconversion. It participates in amino-acid biosynthesis; glycine biosynthesis; glycine from L-serine: step 1/1. Catalyzes the reversible interconversion of serine and glycine with tetrahydrofolate (THF) serving as the one-carbon carrier. This reaction serves as the major source of one-carbon groups required for the biosynthesis of purines, thymidylate, methionine, and other important biomolecules. Also exhibits THF-independent aldolase activity toward beta-hydroxyamino acids, producing glycine and aldehydes, via a retro-aldol mechanism. This chain is Serine hydroxymethyltransferase, found in Bacillus mycoides (strain KBAB4) (Bacillus weihenstephanensis).